Consider the following 202-residue polypeptide: ATP-dependent dethiobiotin synthetase BioD (202 aa).

An ATP-binding site is contributed by 12–17 (GIGKTI). A Mg(2+)-binding site is contributed by Thr-16. Lys-32 is an active-site residue. Substrate is bound at residue Ser-36. Residues Asp-43, 94–97 (EGAG), and 178–180 (PVV) contribute to the ATP site. The Mg(2+) site is built by Asp-43 and Glu-94.

The protein belongs to the dethiobiotin synthetase family. As to quaternary structure, homodimer. Mg(2+) is required as a cofactor.

It is found in the cytoplasm. It catalyses the reaction (7R,8S)-7,8-diammoniononanoate + CO2 + ATP = (4R,5S)-dethiobiotin + ADP + phosphate + 3 H(+). Its pathway is cofactor biosynthesis; biotin biosynthesis; biotin from 7,8-diaminononanoate: step 1/2. Catalyzes a mechanistically unusual reaction, the ATP-dependent insertion of CO2 between the N7 and N8 nitrogen atoms of 7,8-diaminopelargonic acid (DAPA, also called 7,8-diammoniononanoate) to form a ureido ring. This chain is ATP-dependent dethiobiotin synthetase BioD, found in Sphingopyxis alaskensis (strain DSM 13593 / LMG 18877 / RB2256) (Sphingomonas alaskensis).